An 860-amino-acid chain; its full sequence is Ras GTPase-activating-like protein gapA (860 aa).

Over residues 1–20 the composition is skewed to acidic residues; sequence MEGLEIEDEDVILLDEDDDS. The tract at residues 1–48 is disordered; that stretch reads MEGLEIEDEDVILLDEDDDSSSSSTVNNSSSNIKNNGNTNNNIGNDDS. Low complexity predominate over residues 21–46; that stretch reads SSSSTVNNSSSNIKNNGNTNNNIGND. Positions 146-185 form a coiled coil; that stretch reads AEIQELKRNMVAEIRRNHLLERDVNKLDKRIALLIKHRSN. In terms of domain architecture, Ras-GAP spans 269-515; that stretch reads FLILSLFRLA…SIVRQYLEDL (247 aa). Positions 663–732 form a coiled coil; the sequence is NNPQLSSNAE…TIALRDLRKH (70 aa).

In terms of assembly, heterotetramer. Quaternary complex with activated rac1A, ctxA and ctxB in the absence of rgaA.

Functionally, part of signaling pathway that is required for completion of cytokinesis. gapA and rgaA control cortexillin localization to the cleavage furrow and hence may be involved in cleavage of the midbody in the final stage of cytokinesis by regulating the actin cytoskeleton. Forms a complex by linking activated rac1A to ctxA in the absence of rgaA. Assembly of this complex is necessary for the recruitment of cortexillin to the midzone of the dividing cell. The sequence is that of Ras GTPase-activating-like protein gapA (gapA) from Dictyostelium discoideum (Social amoeba).